Here is a 485-residue protein sequence, read N- to C-terminus: GTPase Der (485 aa).

EngA-type G domains follow at residues 3–167 and 176–349; these read PTIA…PEPE and PVFA…NAAM. Residues 9-16, 56-60, 119-122, 182-189, 229-233, and 294-297 each bind GTP; these read GRPNVGKS, DTGGF, NKGE, DTAGV, and NKWD. The KH-like domain maps to 350–434; the sequence is IKMPTPKITR…PLRIQYNVSE (85 aa). A disordered region spans residues 435 to 485; sequence NPYENADDKPKKKPLRRVSLSNRIEKREGRKEEKNRFKKKTKVSVKKQFSK. The segment covering 457–469 has biased composition (basic and acidic residues); sequence RIEKREGRKEEKN. The segment covering 470–485 has biased composition (basic residues); that stretch reads RFKKKTKVSVKKQFSK.

This sequence belongs to the TRAFAC class TrmE-Era-EngA-EngB-Septin-like GTPase superfamily. EngA (Der) GTPase family. In terms of assembly, associates with the 50S ribosomal subunit.

Its function is as follows. GTPase that plays an essential role in the late steps of ribosome biogenesis. In Neisseria meningitidis serogroup A / serotype 4A (strain DSM 15465 / Z2491), this protein is GTPase Der.